The following is a 47-amino-acid chain: Defensin-like protein 1 (47 aa).

Cystine bridges form between C3-C47, C14-C36, C20-C41, and C24-C43.

It belongs to the DEFL family. Protease inhibitor I18 (RTI/MTI-2) subfamily.

In Sorghum bicolor (Sorghum), this protein is Defensin-like protein 1.